The chain runs to 464 residues: Probable glycine dehydrogenase (decarboxylating) subunit 1 (464 aa).

It belongs to the GcvP family. N-terminal subunit subfamily. As to quaternary structure, the glycine cleavage system is composed of four proteins: P, T, L and H. In this organism, the P 'protein' is a heterodimer of two subunits.

It catalyses the reaction N(6)-[(R)-lipoyl]-L-lysyl-[glycine-cleavage complex H protein] + glycine + H(+) = N(6)-[(R)-S(8)-aminomethyldihydrolipoyl]-L-lysyl-[glycine-cleavage complex H protein] + CO2. Its function is as follows. The glycine cleavage system catalyzes the degradation of glycine. The P protein binds the alpha-amino group of glycine through its pyridoxal phosphate cofactor; CO(2) is released and the remaining methylamine moiety is then transferred to the lipoamide cofactor of the H protein. This Thiobacillus denitrificans (strain ATCC 25259 / T1) protein is Probable glycine dehydrogenase (decarboxylating) subunit 1.